The primary structure comprises 102 residues: ATP-dependent Clp protease adapter protein ClpS (102 aa).

It belongs to the ClpS family. As to quaternary structure, binds to the N-terminal domain of the chaperone ClpA.

Functionally, involved in the modulation of the specificity of the ClpAP-mediated ATP-dependent protein degradation. The sequence is that of ATP-dependent Clp protease adapter protein ClpS from Herminiimonas arsenicoxydans.